We begin with the raw amino-acid sequence, 113 residues long: Large ribosomal subunit protein eL31A (113 aa).

Belongs to the eukaryotic ribosomal protein eL31 family. Component of the large ribosomal subunit (LSU). Mature yeast ribosomes consist of a small (40S) and a large (60S) subunit. The 40S small subunit contains 1 molecule of ribosomal RNA (18S rRNA) and 33 different proteins (encoded by 57 genes). The large 60S subunit contains 3 rRNA molecules (25S, 5.8S and 5S rRNA) and 46 different proteins (encoded by 81 genes).

It is found in the cytoplasm. Component of the ribosome, a large ribonucleoprotein complex responsible for the synthesis of proteins in the cell. The small ribosomal subunit (SSU) binds messenger RNAs (mRNAs) and translates the encoded message by selecting cognate aminoacyl-transfer RNA (tRNA) molecules. The large subunit (LSU) contains the ribosomal catalytic site termed the peptidyl transferase center (PTC), which catalyzes the formation of peptide bonds, thereby polymerizing the amino acids delivered by tRNAs into a polypeptide chain. The nascent polypeptides leave the ribosome through a tunnel in the LSU and interact with protein factors that function in enzymatic processing, targeting, and the membrane insertion of nascent chains at the exit of the ribosomal tunnel. The sequence is that of Large ribosomal subunit protein eL31A from Saccharomyces cerevisiae (strain ATCC 204508 / S288c) (Baker's yeast).